Consider the following 547-residue polypeptide: DNA polymerase kappa (547 aa).

The interval 18-39 is disordered; sequence LTIEDDGSSSSDEEATLKRRLA. Positions 20–31 are enriched in acidic residues; it reads IEDDGSSSSDEE. Residues 132–316 enclose the UmuC domain; that stretch reads IVHVDCDAFY…LPVREVSGIG (185 aa). Residues Asp-136 and Asp-226 each contribute to the Mg(2+) site. A UBZ4-type zinc finger spans residues 489–518; it reads TVPCPVCQKNIENELGILNQHVDLCLNVET. Zn(2+) contacts are provided by Cys-492, Cys-495, His-509, and Cys-513.

As to quaternary structure, interacts with hus1 and rad17.

Its subcellular location is the cytoplasm. The protein resides in the nucleus. The enzyme catalyses DNA(n) + a 2'-deoxyribonucleoside 5'-triphosphate = DNA(n+1) + diphosphate. Its function is as follows. DNA polymerase specifically involved in DNA repair. Plays an important role in translesion synthesis, where the normal high-fidelity DNA polymerases cannot proceed and DNA synthesis stalls. Has a role in meiosis. This chain is DNA polymerase kappa (mug40), found in Schizosaccharomyces pombe (strain 972 / ATCC 24843) (Fission yeast).